We begin with the raw amino-acid sequence, 178 residues long: Large ribosomal subunit protein uL5 (178 aa).

The protein belongs to the universal ribosomal protein uL5 family. Part of the 50S ribosomal subunit; part of the 5S rRNA/L5/L18/L25 subcomplex. Contacts the 5S rRNA and the P site tRNA. Forms a bridge to the 30S subunit in the 70S ribosome.

In terms of biological role, this is one of the proteins that bind and probably mediate the attachment of the 5S RNA into the large ribosomal subunit, where it forms part of the central protuberance. In the 70S ribosome it contacts protein S13 of the 30S subunit (bridge B1b), connecting the 2 subunits; this bridge is implicated in subunit movement. Contacts the P site tRNA; the 5S rRNA and some of its associated proteins might help stabilize positioning of ribosome-bound tRNAs. In Psychrobacter arcticus (strain DSM 17307 / VKM B-2377 / 273-4), this protein is Large ribosomal subunit protein uL5.